The chain runs to 686 residues: Putative pentatricopeptide repeat-containing protein At3g49142 (686 aa).

12 PPR repeats span residues 73-103, 104-138, 139-173, 174-204, 205-239, 240-272, 273-307, 308-342, 343-373, 374-408, 409-439, and 445-475; these read NSSL…IPER, NVII…NVRP, DHYT…GLSS, TLFV…MSRR, DVVS…KISH, DAGT…MGKK, SLVS…GFEP, DAVS…KLIP, NLLL…MKSR, DVVS…GLVP, DSIA…MTDH, and RLEH…MSME. The segment at 480–555 is type E motif; sequence VWGALLGACR…NPGASNVEVN (76 aa). Positions 556–586 are type E(+) motif; that stretch reads RIIHTFLVGDRSHPQSDEIYRELDVLVKKMK. Positions 587-686 are type DYW motif; sequence ELGYVPDSES…FGVCSCGDYW (100 aa).

This sequence belongs to the PPR family. PCMP-H subfamily.

In Arabidopsis thaliana (Mouse-ear cress), this protein is Putative pentatricopeptide repeat-containing protein At3g49142 (PCMP-H77).